The primary structure comprises 225 residues: Thaumatin-like protein (225 aa).

The signal sequence occupies residues 1–24; it reads MSTFKSLSLSALLFIAFLFTCARG. 8 cysteine pairs are disulfide-bonded: Cys-33-Cys-224, Cys-74-Cys-84, Cys-89-Cys-95, Cys-140-Cys-213, Cys-146-Cys-196, Cys-154-Cys-164, Cys-168-Cys-177, and Cys-178-Cys-183. Asn-187 carries an N-linked (GlcNAc...) asparagine glycan.

It belongs to the thaumatin family. N-glycosylated. Woody stem plug.

It is found in the secreted. Its function is as follows. Has antifungal activity. The sequence is that of Thaumatin-like protein (tlp) from Actinidia deliciosa (Kiwi).